We begin with the raw amino-acid sequence, 627 residues long: Protein fem-1 homolog B (627 aa).

ANK repeat units follow at residues 45 to 74 (QRST…VQTQ), 87 to 116 (DGAT…NVNH), 120 to 149 (TNST…NISI), 153 to 182 (YDNT…DPNA), 186 to 215 (CGAT…AMMV), and 218 to 248 (HGMT…NRRS). Residues 344-377 (SHPIIYRGAVYADNMEFEQCIKLWLHALHLRQKG) form a TPR repeat. 2 ANK repeats span residues 483 to 527 (DGST…DVNA) and 531 to 568 (EGNS…HTDM).

The protein belongs to the fem-1 family. Component of a CRL2 E3 ubiquitin-protein ligase complex, also named ECS (Elongin BC-CUL2/5-SOCS-box protein) complex.

It is found in the cytoplasm. Its subcellular location is the nucleus. The protein operates within protein modification; protein ubiquitination. Its function is as follows. Substrate-recognition component of a Cul2-RING (CRL2) E3 ubiquitin-protein ligase complex of the DesCEND (destruction via C-end degrons) pathway, which recognizes a C-degron located at the extreme C terminus of target proteins, leading to their ubiquitination and degradation. The C-degron recognized by the DesCEND pathway is usually a motif of less than ten residues and can be present in full-length proteins, truncated proteins or proteolytically cleaved forms. The CRL2(FEM1B) complex specifically recognizes proteins ending with -Gly-Leu-Asp-Arg, leading to their ubiquitination and degradation. This chain is Protein fem-1 homolog B, found in Gallus gallus (Chicken).